The primary structure comprises 213 residues: Cytochrome b6 (213 aa).

A helical membrane pass occupies residues Ile-30–Val-50. Cys-33 contacts heme c. Heme b-binding residues include His-84 and His-98. Transmembrane regions (helical) follow at residues Cys-88–Phe-108, Leu-114–Tyr-134, and Leu-184–Ile-204. Heme b-binding residues include His-185 and His-200.

It belongs to the cytochrome b family. PetB subfamily. As to quaternary structure, the subunits of the cytochrome bc complex are a Rieske Fe-S protein (PetC), cytochrome b6 (PetB), subunit IV (PetD), and a diheme cytochrome c (PetX). Heme b is required as a cofactor. Heme c serves as cofactor.

The protein resides in the cell membrane. Component of the cytochrome bc complex which donates electrons to the photosynthetic reaction center. This chain is Cytochrome b6, found in Heliobacterium modesticaldum (strain ATCC 51547 / Ice1).